Here is a 470-residue protein sequence, read N- to C-terminus: Maturase K (470 aa).

It belongs to the intron maturase 2 family. MatK subfamily.

The protein resides in the plastid. The protein localises to the chloroplast. In terms of biological role, usually encoded in the trnK tRNA gene intron. Probably assists in splicing its own and other chloroplast group II introns. The protein is Maturase K of Nypa fruticans (Nypa palm).